Reading from the N-terminus, the 925-residue chain is Antiviral innate immune response receptor RIG-I (925 aa).

2 consecutive CARD domains span residues methionine 1–glutamate 87 and tryptophan 92–lysine 172. Serine 8 bears the (Microbial infection) Phosphoserine mark. A Phosphoserine modification is found at serine 8. Residues lysine 48, lysine 96, lysine 154, and lysine 164 each participate in a glycyl lysine isopeptide (Lys-Gly) (interchain with G-Cter in ubiquitin) cross-link. Threonine 170 carries the post-translational modification Phosphothreonine. Residues lysine 172, lysine 181, lysine 193, and lysine 203 each participate in a glycyl lysine isopeptide (Lys-Gly) (interchain with G-Cter in ubiquitin) cross-link. The segment at glutamate 218–lysine 925 is interaction with ZC3HAV1. Residues alanine 251 to leucine 430 enclose the Helicase ATP-binding domain. Alanine 264–threonine 271 contacts ATP. A DECH box motif is present at residues aspartate 372–histidine 375. Residues asparagine 495 and asparagine 549 each carry the (Microbial infection) Deamidated asparagine; by herpes simplex virus 1/HHV-1 UL37 modification. The Helicase C-terminal domain occupies lysine 610–phenylalanine 776. The tract at residues glycine 735–lysine 925 is mediates interaction with RNF135. Threonine 770 is subject to Phosphothreonine; by CK2. An RLR CTR domain is found at glutamine 794–lysine 925. Cysteine 810 is a binding site for Zn(2+). Lysine 812 is covalently cross-linked (Glycyl lysine isopeptide (Lys-Gly) (interchain with G-Cter in ubiquitin)). Cysteine 813 lines the Zn(2+) pocket. A phosphoserine; by CK2 mark is found at serine 854 and serine 855. Position 858 is an N6-acetyllysine (lysine 858). Zn(2+) is bound by residues cysteine 864 and cysteine 869. Lysine 909 carries the N6-acetyllysine modification.

Belongs to the helicase family. RLR subfamily. In terms of assembly, monomer; maintained as a monomer in an autoinhibited state. Upon binding of viral RNAs and conformational shift, homooligomerizes and forms filaments on these molecules. Interacts (via tandem CARD domain) with MAVS/IPS1 promoting its filamentation. Interacts with DHX58/LGP2, IKBKE, TBK1 and STING1. Interacts (via CARD domain) with TRIM25 (via SPRY domain). Interacts (double-stranded RNA-bound oligomeric form) with RNF135 (homodimer); involved in RNA length-dependent activation of the RIG-I signaling pathway. Interacts with CYLD. Interacts with NLRC5; blocks the interaction of MAVS/IPS1 to RIGI. Interacts with SRC. Interacts with DDX60. Interacts with isoform 2 of ZC3HAV1 (via zinc-fingers) in an RNA-dependent manner. Interacts (via tandem CARD domain) with SEC14L1; the interaction is direct and impairs the interaction of RIGI with MAVS/IPS1. Interacts with VCP/p97; interaction is direct and allows the recruitment of RNF125 and subsequent ubiquitination and degradation. Interacts with NOP53; may regulate RIGI through USP15-mediated 'Lys-63'-linked deubiquitination. Interacts with SIGLEC10, CBL and PTPN11; within a negative feedback loop leading to RIGI degradation. Interacts with LRRC25. Interacts with ZCCHC3; leading to activation of RIGI. Interacts with RNF123. Interacts with UBE2D3 and UBE2N; E2 ubiquitin ligases involved in RNF135-mediated ubiquitination of RIGI and activation of the RIG-I signaling pathway. Interacts with IFIT3. Interacts with DDX3X. Interacts with RTN3. Interacts with ARL16; this interaction is GTP-dependent and induced upon viral infection; this interaction suppresses the RNA sensing activity of RIGI. Interacts with DHX16; this interaction enhances RIGI-mediated antiviral response. Interacts with IRGM; promoting RIGI degradation. Interacts with IFI6; this interaction inhibits RIGI activation. Interacts with ECSIT; this interaction bridges RIGI to the MAVS complex at the mitochondrion. Interacts with YWHAE; this interaction drives RIGI at the mitochondrion. As to quaternary structure, (Microbial infection) Interacts with protein Z of Guanarito virus, Machupo virus, Junin arenavirus and Sabia virus. This interaction disrupts its interaction with MAVS/IPS1, impeding downstream IRF3 and NF-kappa-B activation and resulting in decreased IFN-beta induction. (Microbial infection) Interacts (via CARD domain) with Human respiratory syncytial virus A non-structural protein 2 (NS2) and this interaction disrupts its interaction with MAVS/IPS1, impeding downstream IRF3 activation. In terms of assembly, (Microbial infection) Interacts with Rotavirus A non-structural protein 1 (NSP1) and this interaction induces down-regulation of RIGI. As to quaternary structure, (Microbial infection) Interacts with paramyxoviruses (Sendai virus, Nipah virus, Measles virus and Parainfluenza virus 5) protein V; this interaction inhibits TRIM25-mediated ubiquitination of RIG-I and prevents downstream RIG-I signaling thereby inhibiting the IFN responses. (Microbial infection) Interacts with herpes simplex virus 1 protein US11; this interaction prevents the interaction of MAVS/IPS1 to RIGI. In terms of assembly, (Microbial infection) Interacts with herpes simplex virus 1 protein UL37; this interaction deaminates RIGI and inhibits its activation. As to quaternary structure, (Microbial infection) Interacts with Severe fever with thrombocytopenia virus (SFTSV) NSs; this interaction this interaction sequesters RIGI in NSs-induced cytoplasmic inclusion bodies thereby inhibiting the IFN responses. Phosphorylated in resting cells and dephosphorylated in RNA virus-infected cells. Phosphorylation at Thr-770, Ser-854 and Ser-855 results in inhibition of its activity while dephosphorylation at these sites results in its activation. In terms of processing, ubiquitinated. 'Lys-63' ubiquitination by RNF135, which occurs after RNA-binding and homodimerization, releases the autoinhibition of the CARD domains by the RLR CTR domain, an essential step in the activation of the RIG-I signaling pathway. Lys-172 is the critical site of ubiquitination for MAVS/IPS1 binding and to induce anti-viral signal transduction. Lys-154, Lys-164 and Lys-172 are shared sites for RNF135-mediated and TRIM4-mediated ubiquitination. Also undergoes 'Lys-48' ubiquitination at Lys-181 by RNF125 that leads to proteasomal degradation. 'Lys-48' ubiquitination follows viral infection and is enhanced by 'Lys-63'-linked ubiquitination of the CARD domains that promotes interaction with VCP/p97 and subsequent recruitment of RNF125. Within a negative feedback loop involving SIGLEC10 and PTPN11, 'Lys-48' ubiquitination at Lys-812 by CBL also elicits the proteasomal degradation of RIGI. Deubiquitinated by CYLD, a protease that selectively cleaves 'Lys-63'-linked ubiquitin chains. Also probably deubiquitinated by USP17L2/USP17 that cleaves 'Lys-48'- and 'Lys-63'-linked ubiquitin chains and positively regulates the receptor. Ubiquitinated by TRIM40 via 'Lys-48'-linked ubiquitination; leading to proteasomal degradation. Deubiquitinated by USP27X that cleaves 'Lys-63'-linked ubiquitin chains and inhibits the innate immune receptor activity. Deubiquitinated by USP3 that also cleaves 'Lys-63'-linked ubiquitin chains and inhibits the innate immune receptor activity. Undergoes 'Lys-48'-linked ubiquitination catalyzed by MARCHF5 at Lys-193 and Lys-203, leading to proteasomal degradation. Post-translationally, phosphorylated at Ser-8 and Thr-170; these phosphorylations suppresse the TRIM25-mediated 'Lys-63'-linked ubiquitination of RIG-I and thereby prevents RIG-I downstream signaling. Dephosphorylated by phosphatases PPP1CA/PPP1CC; this step is essential to activate RIGI and initiate downstream signaling. ISGylated. Conjugated to ubiquitin-like protein ISG15 upon IFN-beta stimulation. ISGylation negatively regulates its function in antiviral signaling response. In terms of processing, sumoylated, probably by MUL1; inhibiting its polyubiquitination. Post-translationally, acetylated in response to RNA virus infection. Deacetylated by HDAC6 in the presence of viral mRNAs which is required for detection of viral RNA by RIGI. (Microbial infection) Deamidated on Asn-495 and Asn-549 by herpes simplex virus 1 protein UL37. These modifications eliminate RIGI detection of viral RNA and restriction of viral replication. In terms of processing, degraded via selective autophagy following interaction with IRGM. IRGM promotes RIGI recruitment to autophagosome membranes, promoting its SQSTM1/p62-dependent autophagic degradation. Post-translationally, (Microbial infection) Cleaved by the protease 3C of coxsackievirus B3, poliovirus and enterovirus 71 allowing the virus to disrupt the host type I interferon production. (Microbial infection) Phosphorylated at Ser-8 by herpes simplex virus 1 protein US3 leading to inhibition of critical RIGI activation steps. As to expression, present in vascular smooth cells (at protein level).

It is found in the cytoplasm. The protein resides in the cell projection. The protein localises to the ruffle membrane. Its subcellular location is the cytoskeleton. It localises to the cell junction. It is found in the tight junction. It carries out the reaction ATP + H2O = ADP + phosphate + H(+). Its function is as follows. Innate immune receptor that senses cytoplasmic viral nucleic acids and activates a downstream signaling cascade leading to the production of type I interferons and pro-inflammatory cytokines. Forms a ribonucleoprotein complex with viral RNAs on which it homooligomerizes to form filaments. The homooligomerization allows the recruitment of RNF135 an E3 ubiquitin-protein ligase that activates and amplifies the RIG-I-mediated antiviral signaling in an RNA length-dependent manner through ubiquitination-dependent and -independent mechanisms. Upon activation, associates with mitochondria antiviral signaling protein (MAVS/IPS1) that activates the IKK-related kinases TBK1 and IKBKE which in turn phosphorylate the interferon regulatory factors IRF3 and IRF7, activating transcription of antiviral immunological genes including the IFN-alpha and IFN-beta interferons. Ligands include 5'-triphosphorylated ssRNAs and dsRNAs but also short dsRNAs (&lt;1 kb in length). In addition to the 5'-triphosphate moiety, blunt-end base pairing at the 5'-end of the RNA is very essential. Overhangs at the non-triphosphorylated end of the dsRNA RNA have no major impact on its activity. A 3'overhang at the 5'triphosphate end decreases and any 5'overhang at the 5' triphosphate end abolishes its activity. Detects both positive and negative strand RNA viruses including members of the families Paramyxoviridae: Human respiratory syncytial virus and measles virus (MeV), Rhabdoviridae: vesicular stomatitis virus (VSV), Orthomyxoviridae: influenza A and B virus, Flaviviridae: Japanese encephalitis virus (JEV), hepatitis C virus (HCV), dengue virus (DENV) and west Nile virus (WNV). It also detects rotaviruses and reoviruses. Detects and binds to SARS-CoV-2 RNAs which is inhibited by m6A RNA modifications. Also involved in antiviral signaling in response to viruses containing a dsDNA genome such as Epstein-Barr virus (EBV). Detects dsRNA produced from non-self dsDNA by RNA polymerase III, such as Epstein-Barr virus-encoded RNAs (EBERs). May play important roles in granulocyte production and differentiation, bacterial phagocytosis and in the regulation of cell migration. The protein is Antiviral innate immune response receptor RIG-I of Homo sapiens (Human).